Here is a 306-residue protein sequence, read N- to C-terminus: Diacylglycerol kinase (306 aa).

Residues Met1–Tyr132 form the DAGKc domain. Residues Asn10–Gly14, Thr41, Gly67–Glu73, and Thr94 each bind ATP. Mg(2+) contacts are provided by Arg213, Asp216, and Tyr218. Glu273 functions as the Proton acceptor in the catalytic mechanism.

Belongs to the diacylglycerol/lipid kinase family. In terms of assembly, homodimer. It depends on Mg(2+) as a cofactor.

It catalyses the reaction a 1,2-diacyl-sn-glycerol + ATP = a 1,2-diacyl-sn-glycero-3-phosphate + ADP + H(+). Catalyzes the phosphorylation of diacylglycerol (DAG) into phosphatidic acid. Is a key enzyme involved in the production of lipoteichoic acid by reintroducing DAG formed from the breakdown of membrane phospholipids into the phosphatidylglycerol biosynthetic pathway. The chain is Diacylglycerol kinase (dagK) from Staphylococcus carnosus (strain TM300).